The primary structure comprises 379 residues: Probable pectin lyase A (379 aa).

The signal sequence occupies residues 1–19 (MKFALLSGVAAGLLPVVSA). 2 cysteine pairs are disulfide-bonded: Cys82/Cys101 and Cys91/Cys225. Residue Arg255 is part of the active site. Cys322 and Cys330 are oxidised to a cystine.

This sequence belongs to the polysaccharide lyase 1 family.

The protein resides in the secreted. The catalysed reaction is Eliminative cleavage of (1-&gt;4)-alpha-D-galacturonan methyl ester to give oligosaccharides with 4-deoxy-6-O-methyl-alpha-D-galact-4-enuronosyl groups at their non-reducing ends.. Functionally, pectinolytic enzymes consist of four classes of enzymes: pectin lyase, polygalacturonase, pectin methylesterase and rhamnogalacturonase. Among pectinolytic enzymes, pectin lyase is the most important in depolymerization of pectin, since it cleaves internal glycosidic bonds of highly methylated pectins. The sequence is that of Probable pectin lyase A (pelA) from Aspergillus oryzae (strain ATCC 42149 / RIB 40) (Yellow koji mold).